Here is a 379-residue protein sequence, read N- to C-terminus: Cytochrome b (379 aa).

A run of 4 helical transmembrane segments spans residues 34–54 (FGSL…LLAM), 78–99 (WLIR…YLHI), 114–134 (WNTG…GYVL), and 179–199 (FFAL…IHLT). Heme b contacts are provided by His-84 and His-98. 2 residues coordinate heme b: His-183 and His-197. His-202 lines the a ubiquinone pocket. A run of 4 helical transmembrane segments spans residues 227–247 (LKDI…AFFS), 289–309 (LGGV…PFLH), 321–341 (LSQV…WIGS), and 348–368 (FIII…ILFP).

Belongs to the cytochrome b family. The cytochrome bc1 complex contains 11 subunits: 3 respiratory subunits (MT-CYB, CYC1 and UQCRFS1), 2 core proteins (UQCRC1 and UQCRC2) and 6 low-molecular weight proteins (UQCRH/QCR6, UQCRB/QCR7, UQCRQ/QCR8, UQCR10/QCR9, UQCR11/QCR10 and a cleavage product of UQCRFS1). This cytochrome bc1 complex then forms a dimer. Requires heme b as cofactor.

It localises to the mitochondrion inner membrane. In terms of biological role, component of the ubiquinol-cytochrome c reductase complex (complex III or cytochrome b-c1 complex) that is part of the mitochondrial respiratory chain. The b-c1 complex mediates electron transfer from ubiquinol to cytochrome c. Contributes to the generation of a proton gradient across the mitochondrial membrane that is then used for ATP synthesis. The polypeptide is Cytochrome b (MT-CYB) (Casuarius bennetti (Dwarf cassowary)).